The sequence spans 64 residues: MGMRMMFTLFLLVVLTTTVVSYPSDSASDGRDDEAKDERSDMYELKRNGRCCHPACGKHFNCGR.

Residues 1–21 form the signal peptide; that stretch reads MGMRMMFTLFLLVVLTTTVVS. Residues 22-47 constitute a propeptide that is removed on maturation; it reads YPSDSASDGRDDEAKDERSDMYELKR. Intrachain disulfides connect C51-C56 and C52-C62. Residue C62 is modified to Cysteine amide.

It belongs to the conotoxin A superfamily. In terms of tissue distribution, expressed by the venom duct.

The protein localises to the secreted. Functionally, alpha-conotoxins act on postsynaptic membranes, they bind to the nicotinic acetylcholine receptors (nAChR) and thus inhibit them. The protein is Alpha-conotoxin-like Ac1.1a of Conus achatinus (Little frog cone).